We begin with the raw amino-acid sequence, 128 residues long: Large ribosomal subunit protein bL19 (128 aa).

Belongs to the bacterial ribosomal protein bL19 family.

Its function is as follows. This protein is located at the 30S-50S ribosomal subunit interface and may play a role in the structure and function of the aminoacyl-tRNA binding site. The protein is Large ribosomal subunit protein bL19 of Paracidovorax citrulli (strain AAC00-1) (Acidovorax citrulli).